The following is a 325-amino-acid chain: Eukaryotic translation initiation factor 3 subunit I (325 aa).

4 WD repeats span residues 8–47 (GHERSITQIKYNREGDLLFTVAKDPIVNVWYSVNGERLGT), 50–91 (GHTG…ALLK), 144–183 (CNDSKITSAVWGPLGECIIAGHESGELNQYSAKSGEVLVN), and 186–225 (EHSRQINDIQLSRDMTMFVTASKDNTAKLFDSTTLEHQKT). Residue Thr-219 is modified to Phosphothreonine. N6-acetyllysine is present on Lys-264. Lys-282 is covalently cross-linked (Glycyl lysine isopeptide (Lys-Gly) (interchain with G-Cter in ubiquitin)). The WD 5 repeat unit spans residues 283-324 (GHFGLINSVAFHPDGKSYSSGGEDGYVRIHYFDPQYFEFEFE). At Tyr-308 the chain carries Phosphotyrosine.

The protein belongs to the eIF-3 subunit I family. In terms of assembly, component of the eukaryotic translation initiation factor 3 (eIF-3) complex, which is composed of 13 subunits: EIF3A, EIF3B, EIF3C, EIF3D, EIF3E, EIF3F, EIF3G, EIF3H, EIF3I, EIF3J, EIF3K, EIF3L and EIF3M. The eIF-3 complex appears to include 3 stable modules: module A is composed of EIF3A, EIF3B, EIF3G and EIF3I; module B is composed of EIF3F, EIF3H, and EIF3M; and module C is composed of EIF3C, EIF3D, EIF3E, EIF3K and EIF3L. EIF3C of module C binds EIF3B of module A and EIF3H of module B, thereby linking the three modules. EIF3J is a labile subunit that binds to the eIF-3 complex via EIF3B. The eIF-3 complex interacts with RPS6KB1 under conditions of nutrient depletion. Mitogenic stimulation leads to binding and activation of a complex composed of MTOR and RPTOR, leading to phosphorylation and release of RPS6KB1 and binding of EIF4B to eIF-3. Post-translationally, phosphorylated by TGF-beta type II receptor.

The protein localises to the cytoplasm. Its function is as follows. Component of the eukaryotic translation initiation factor 3 (eIF-3) complex, which is required for several steps in the initiation of protein synthesis. The eIF-3 complex associates with the 40S ribosome and facilitates the recruitment of eIF-1, eIF-1A, eIF-2:GTP:methionyl-tRNAi and eIF-5 to form the 43S pre-initiation complex (43S PIC). The eIF-3 complex stimulates mRNA recruitment to the 43S PIC and scanning of the mRNA for AUG recognition. The eIF-3 complex is also required for disassembly and recycling of post-termination ribosomal complexes and subsequently prevents premature joining of the 40S and 60S ribosomal subunits prior to initiation. The eIF-3 complex specifically targets and initiates translation of a subset of mRNAs involved in cell proliferation, including cell cycling, differentiation and apoptosis, and uses different modes of RNA stem-loop binding to exert either translational activation or repression. The protein is Eukaryotic translation initiation factor 3 subunit I of Pongo abelii (Sumatran orangutan).